The chain runs to 316 residues: Annexin D7 (316 aa).

A2 carries the post-translational modification N-acetylalanine. Annexin repeat units follow at residues 11–82 (PLPE…LWTF), 83–154 (EPAE…PLVS), 166–237 (TLAR…AVIK), and 241–312 (YPEK…ALLG). F24, G26, G28, and E68 together coordinate Ca(2+). Residue S95 is modified to Phosphoserine. Phosphothreonine is present on residues T100 and T112. Y129 is modified (phosphotyrosine). Ca(2+) contacts are provided by I254 and G258. Phosphotyrosine is present on Y283. S288 is subject to Phosphoserine. Residues D298, T299, and E304 each contribute to the Ca(2+) site.

It belongs to the annexin (TC 1.A.31.1) family. In terms of tissue distribution, expressed in flowers.

The chain is Annexin D7 (ANNAT7) from Arabidopsis thaliana (Mouse-ear cress).